We begin with the raw amino-acid sequence, 491 residues long: MTTWNKCLKKLKKSLSTFEYKTWIKPIHVEQNNYLFTIYCNNEYFKKHIKSKYGEIISSTIQEFHDGDLLIEYSNKKFSGEKSPEVTSVGPQANFFNQKNVEIKDDSEETSLNQEPKKSQKKLSSKNSASQELFGFDEAMLITDKDDQEYSFGLPLKEKYVFDSFVVGDANKIARAAAMQVSINPGKLHNPLFIYGGSGLGKTHLMQAIGNHAREVNPNARIIYTNSEQFIKDYVNSIRLQDQDEFQRVYRSADILLIDDIQFIAGKEGTAQEFFHTFNALYENGKQIILTSDKYPNEIEGLEERLVSRFGYGLTVSVDMPDLETRIAILLKKAHDLGQKLPNETAAFIAENVRTNVRELEGALNRVLTTSKFNHKDPTIEVAQACLRDVIKIQEKKVKIDNIQKVVADFYRIRVKDLTSNQRSRNIARPRQIAMSLARELTSHSLPEIGNAFGGRDHTTVMHAVKAITKLRQSNTSISDDYELLLDKISR.

The tract at residues 1 to 69 (MTTWNKCLKK…TIQEFHDGDL (69 aa)) is domain I, interacts with DnaA modulators. Positions 69-154 (LLIEYSNKKF…KDDQEYSFGL (86 aa)) are domain II. The interval 106–126 (DSEETSLNQEPKKSQKKLSSK) is disordered. The domain III, AAA+ region stretch occupies residues 155-371 (PLKEKYVFDS…GALNRVLTTS (217 aa)). ATP contacts are provided by G199, G201, K202, and T203. The interval 372–491 (KFNHKDPTIE…YELLLDKISR (120 aa)) is domain IV, binds dsDNA.

It belongs to the DnaA family. As to quaternary structure, oligomerizes as a right-handed, spiral filament on DNA at oriC.

It localises to the cytoplasm. Plays an essential role in the initiation and regulation of chromosomal replication. ATP-DnaA binds to the origin of replication (oriC) to initiate formation of the DNA replication initiation complex once per cell cycle. Binds the DnaA box (a 9 base pair repeat at the origin) and separates the double-stranded (ds)DNA. Forms a right-handed helical filament on oriC DNA; dsDNA binds to the exterior of the filament while single-stranded (ss)DNA is stabiized in the filament's interior. The ATP-DnaA-oriC complex binds and stabilizes one strand of the AT-rich DNA unwinding element (DUE), permitting loading of DNA polymerase. After initiation quickly degrades to an ADP-DnaA complex that is not apt for DNA replication. Binds acidic phospholipids. This Francisella philomiragia subsp. philomiragia (strain ATCC 25017 / CCUG 19701 / FSC 153 / O#319-036) protein is Chromosomal replication initiator protein DnaA.